We begin with the raw amino-acid sequence, 129 residues long: Small ribosomal subunit protein uS11 (129 aa).

This sequence belongs to the universal ribosomal protein uS11 family. Part of the 30S ribosomal subunit. Interacts with proteins S7 and S18. Binds to IF-3.

In terms of biological role, located on the platform of the 30S subunit, it bridges several disparate RNA helices of the 16S rRNA. Forms part of the Shine-Dalgarno cleft in the 70S ribosome. The chain is Small ribosomal subunit protein uS11 from Agrobacterium fabrum (strain C58 / ATCC 33970) (Agrobacterium tumefaciens (strain C58)).